The chain runs to 361 residues: Chorismate synthase (361 aa).

NADP(+) is bound at residue R47. FMN is bound by residues 124 to 126 (RAS), G286, 301 to 305 (KPTAT), and R327.

Belongs to the chorismate synthase family. As to quaternary structure, homotetramer. The cofactor is FMNH2.

It catalyses the reaction 5-O-(1-carboxyvinyl)-3-phosphoshikimate = chorismate + phosphate. Its pathway is metabolic intermediate biosynthesis; chorismate biosynthesis; chorismate from D-erythrose 4-phosphate and phosphoenolpyruvate: step 7/7. In terms of biological role, catalyzes the anti-1,4-elimination of the C-3 phosphate and the C-6 proR hydrogen from 5-enolpyruvylshikimate-3-phosphate (EPSP) to yield chorismate, which is the branch point compound that serves as the starting substrate for the three terminal pathways of aromatic amino acid biosynthesis. This reaction introduces a second double bond into the aromatic ring system. The protein is Chorismate synthase of Prochlorococcus marinus (strain NATL1A).